The following is a 126-amino-acid chain: Prefoldin subunit beta (126 aa).

Belongs to the prefoldin subunit beta family. In terms of assembly, heterohexamer of two alpha and four beta subunits.

The protein localises to the cytoplasm. Functionally, molecular chaperone capable of stabilizing a range of proteins. Seems to fulfill an ATP-independent, HSP70-like function in archaeal de novo protein folding. The polypeptide is Prefoldin subunit beta (Methanocella arvoryzae (strain DSM 22066 / NBRC 105507 / MRE50)).